Consider the following 357-residue polypeptide: MNESYRCQTSTWVERGSSATMGAVLFGAGLLGNLLALVLLARSGLGSCRPGPLHPPPSVFYVLVCGLTVTDLLGKCLISPMVLAAYAQNQSLKELLPASGNQLCETFAFLMSFFGLASTLQLLAMAVECWLSLGHPFFYQRHVTLRRGVLVAPVVAAFCLAFCALPFAGFGKFVQYCPGTWCFIQMIHKERSFSVIGFSVLYSSLMALLVLATVVCNLGAMYNLYDMHRRQRHYPHRCSRDRAQSGSDYRHGSLHPLEELDHFVLLALMTVLFTMCSLPLIYRAYYGAFKLENKAEGDSEDLQALRFLSVISIVDPWIFIIFRTSVFRMLFHKVFTRPLIYRNWSSHSQQSNVESTL.

Topologically, residues 1–20 are extracellular; the sequence is MNESYRCQTSTWVERGSSAT. N2 carries an N-linked (GlcNAc...) asparagine glycan. The helical transmembrane segment at 21–41 threads the bilayer; that stretch reads MGAVLFGAGLLGNLLALVLLA. Residues 42 to 58 are Cytoplasmic-facing; sequence RSGLGSCRPGPLHPPPS. Residues 59-79 form a helical membrane-spanning segment; it reads VFYVLVCGLTVTDLLGKCLIS. The Extracellular segment spans residues 80-106; it reads PMVLAAYAQNQSLKELLPASGNQLCET. A glycan (N-linked (GlcNAc...) asparagine) is linked at N89. C104 and C182 form a disulfide bridge. A helical membrane pass occupies residues 107-127; sequence FAFLMSFFGLASTLQLLAMAV. The Cytoplasmic segment spans residues 128 to 149; that stretch reads ECWLSLGHPFFYQRHVTLRRGV. The helical transmembrane segment at 150-170 threads the bilayer; the sequence is LVAPVVAAFCLAFCALPFAGF. Topologically, residues 171–194 are extracellular; sequence GKFVQYCPGTWCFIQMIHKERSFS. Residues 195–215 traverse the membrane as a helical segment; the sequence is VIGFSVLYSSLMALLVLATVV. The Cytoplasmic portion of the chain corresponds to 216–261; that stretch reads CNLGAMYNLYDMHRRQRHYPHRCSRDRAQSGSDYRHGSLHPLEELD. The helical transmembrane segment at 262–282 threads the bilayer; it reads HFVLLALMTVLFTMCSLPLIY. The Extracellular portion of the chain corresponds to 283-306; it reads RAYYGAFKLENKAEGDSEDLQALR. The chain crosses the membrane as a helical span at residues 307–327; sequence FLSVISIVDPWIFIIFRTSVF. Residues 328-357 lie on the Cytoplasmic side of the membrane; the sequence is RMLFHKVFTRPLIYRNWSSHSQQSNVESTL.

The protein belongs to the G-protein coupled receptor 1 family. In terms of tissue distribution, most abundantly expressed in the ileum, followed by lung, stomach and uterus.

Its subcellular location is the cell membrane. Functionally, receptor for prostaglandin D2 (PGD2). The activity of this receptor is mainly mediated by G(s) proteins that stimulate adenylate cyclase, resulting in an elevation of intracellular cAMP. A mobilization of calcium is also observed, but without formation of inositol 1,4,5-trisphosphate. Involved in PLA2G3-dependent maturation of mast cells. PLA2G3 is secreted by immature mast cells and acts on nearby fibroblasts upstream to PTDGS to synthesize PGD2, which in turn promotes mast cell maturation and degranulation via PTGDR. The chain is Prostaglandin D2 receptor (Ptgdr) from Mus musculus (Mouse).